A 428-amino-acid polypeptide reads, in one-letter code: Trigger factor (428 aa).

The PPIase FKBP-type domain occupies 163-248; the sequence is GDMVIIDYKG…IHEIKEKEVP (86 aa).

This sequence belongs to the FKBP-type PPIase family. Tig subfamily.

The protein localises to the cytoplasm. The catalysed reaction is [protein]-peptidylproline (omega=180) = [protein]-peptidylproline (omega=0). Involved in protein export. Acts as a chaperone by maintaining the newly synthesized protein in an open conformation. Functions as a peptidyl-prolyl cis-trans isomerase. The chain is Trigger factor from Alkaliphilus oremlandii (strain OhILAs) (Clostridium oremlandii (strain OhILAs)).